Consider the following 362-residue polypeptide: Dihydroorotate dehydrogenase (quinone) (362 aa).

FMN contacts are provided by residues 62–66 and T86; that span reads AGYDK. Residue K66 coordinates substrate. Residue 111 to 115 coordinates substrate; sequence NRLGF. Positions 139 and 170 each coordinate FMN. Residue N170 participates in substrate binding. The active-site Nucleophile is S173. N175 is a substrate binding site. Residues K215 and S243 each contribute to the FMN site. Position 244-245 (244-245) interacts with substrate; that stretch reads NT. Residues G266, G295, and 316–317 contribute to the FMN site; that span reads YS.

The protein belongs to the dihydroorotate dehydrogenase family. Type 2 subfamily. In terms of assembly, monomer. Requires FMN as cofactor.

It is found in the cell membrane. It catalyses the reaction (S)-dihydroorotate + a quinone = orotate + a quinol. It participates in pyrimidine metabolism; UMP biosynthesis via de novo pathway; orotate from (S)-dihydroorotate (quinone route): step 1/1. Catalyzes the conversion of dihydroorotate to orotate with quinone as electron acceptor. The protein is Dihydroorotate dehydrogenase (quinone) of Rhizobium leguminosarum bv. trifolii (strain WSM2304).